The chain runs to 498 residues: MLRATLARLEMAPKVTHIQEKLLINGKFVPAVSGKTFEVVNPADEKVIANVAEAEKADVDLAVKAARHAFESFRMTDCQWRRNLMLRLADILEKNSKEMAALESLDNGKPYEVALNVDVALSVECFRYCAGLADKVNGTVPPRSGNFLGIVKRQPIGVCGQIIPWNFPLLMAAFKLSPALAMGNTVVLKPAEQTPLTAVRLGEMVMEAGYPDGVLNILPGFGATAGSEIARHMDVDKIAFTGSTAVGHQVMQMAAETNLKKVSLELGGKSALIVCEDADLEEAAEVATTRVYFNTGQVCTASSRIYVHESVYDEFVSRLRKNAEARKVGPGNDTGNNMGPLVSKKQHERVLGYIEDGVKAGATVVTGGKKIGDKGYFVQPTIFSDVKEDMRICKEEIFGPVTCVMKYKDMDEVVKRANDSIYGLAAGICTRSMDTALRYSTYLNAGTVWVNTWNNFCPSMPFGGFKQSGIGRELGKEVVDMYTEPKAIHFASRSIVKP.

A mitochondrion-targeting transit peptide spans 1–9 (MLRATLARL). 242–247 (GSTAVG) provides a ligand contact to NAD(+). The Proton acceptor role is filled by E265. C299 acts as the Nucleophile in catalysis.

It belongs to the aldehyde dehydrogenase family.

It localises to the mitochondrion. It carries out the reaction an aldehyde + NAD(+) + H2O = a carboxylate + NADH + 2 H(+). It participates in alcohol metabolism; ethanol degradation; acetate from ethanol: step 2/2. Could have an RNA-binding activity in addition of its catalytic role. This Leishmania tarentolae (Sauroleishmania tarentolae) protein is Aldehyde dehydrogenase, mitochondrial (ALDH2).